Reading from the N-terminus, the 232-residue chain is MQTRLTAILAAFLTAVALLAGCSKSEESTATDLPDAATLLQQSAETTRGESSVHLLLRTTGELEELPIHSLEGDLTNTPAVAAEGKTTVTVMGQKVEDMPFVVADGDLYAALFGDAISLIGPAADIYDVGAILDPERGLANVLSNFSDAKSVDREKVNDVETVKITGKVSADAVNRIAPQLAVQDAVGGTAWIADGGDHELVQVQLEPRDGVTVTMTLSDWGKPVTVTKPAA.

Residues 1–21 (MQTRLTAILAAFLTAVALLAG) form the signal peptide. A lipid anchor (N-palmitoyl cysteine) is attached at C22. Residue C22 is the site of S-diacylglycerol cysteine attachment.

It belongs to the LppX/LprAFG lipoprotein family. Modified by Lgt on Cys-22 with an S-linked diacylglyceral, signal peptide is removed by LspA, Cys-22 is further modifed with a fatty acid on its amino group by Lnt yielding a triacylated protein.

It localises to the cell inner membrane. In terms of biological role, helps membrane protein MHAS_02168/C731_2106 (P55) transport triacylglycerides (TAG) across the inner cell membrane into the periplasm and probably ultimately to the outer membrane. Binds TAG in its hydrophobic cavity and transfers it between lipid bilayers. TAG probably regulates lipid metabolism and growth regulation and plays a structural role in the outer membrane. Also binds mannosides, lipoarabinomannan and lipomannan and various glycolipids in the same cavity. The lprG-MHAS_02167/C731_2107 operon complements the vancomycin sensitivity of an M.smegmatis knockout of the same operon. The chain is Lipoarabinomannan carrier protein LprG from Mycolicibacterium hassiacum (strain DSM 44199 / CIP 105218 / JCM 12690 / 3849) (Mycobacterium hassiacum).